A 360-amino-acid chain; its full sequence is Nucleoporin SEH1-A (360 aa).

WD repeat units follow at residues D10–C49, T55–K96, D111–Q152, S160–A210, S217–S258, and N276–C315.

The protein belongs to the WD repeat SEC13 family. As to quaternary structure, component of the Nup107-160 subcomplex of the nuclear pore complex (NPC). The Nup107-160 subcomplex includes NUP160, NUP133, NUP107, NUP98, NUP85, NUP43, NUP37, SEH1 and SEC13. Component of the GATOR2 subcomplex, composed of MIOS, SEC13, SEH1L, WDR24 and WDR59. The GATOR2 complex interacts with CASTOR1 and CASTOR2; the interaction is negatively regulated by arginine. The GATOR2 complex interacts with SESN1, SESN2 and SESN3; the interaction is negatively regulated by amino acids.

The protein localises to the chromosome. The protein resides in the centromere. Its subcellular location is the kinetochore. It is found in the nucleus. It localises to the nuclear pore complex. The protein localises to the lysosome membrane. With respect to regulation, the GATOR2 complex is negatively regulated by the upstream amino acid sensors CASTOR1 and SESN2, which sequester the GATOR2 complex in absence of amino acids. In the presence of abundant amino acids, GATOR2 is released from CASTOR1 and SESN2 and activated. Component of the Nup107-160 subcomplex of the nuclear pore complex (NPC). The Nup107-160 subcomplex is required for the assembly of a functional NPC. The Nup107-160 subcomplex is also required for normal kinetochore microtubule attachment, mitotic progression and chromosome segregation. This subunit plays a role in recruitment of the Nup107-160 subcomplex to the kinetochore. Its function is as follows. As a component of the GATOR2 complex, functions as an activator of the amino acid-sensing branch of the mTORC1 signaling pathway. The GATOR2 complex indirectly activates mTORC1 through the inhibition of the GATOR1 subcomplex. GATOR2 probably acts as an E3 ubiquitin-protein ligase toward GATOR1. In the presence of abundant amino acids, the GATOR2 complex mediates ubiquitination of the NPRL2 core component of the GATOR1 complex, leading to GATOR1 inactivation. In the absence of amino acids, GATOR2 is inhibited, activating the GATOR1 complex. This chain is Nucleoporin SEH1-A (seh1l-a), found in Xenopus laevis (African clawed frog).